The following is a 671-amino-acid chain: Major S-layer protein (671 aa).

The first 24 residues, 1-24, serve as a signal peptide directing secretion; it reads MKRFAALSLAALMLLTVFASAASA. N36, N70, N116, and N350 each carry an N-linked (GlcNAc...) asparagine glycan. A disordered region spans residues 594–650; the sequence is GEEVSGEEETPEETPTGEVTETEGEEETPTEVTETPTEGEPAPEETETTESEGTTPG. The span at 613–622 shows a compositional bias: acidic residues; sequence TETEGEEETP. Over residues 623-633 the composition is skewed to low complexity; it reads TEVTETPTEGE. Residues 634–643 are compositionally biased toward acidic residues; sequence PAPEETETTE. The helical transmembrane segment at 647–667 threads the bilayer; the sequence is TTPGFGFMFGLVGLLAVVYLV.

It belongs to the Methanosarcinales S-layer protein family. Post-translationally, glycosylated.

Its subcellular location is the secreted. The protein resides in the cell wall. The protein localises to the S-layer. It localises to the cell membrane. Functionally, S-layer protein. The S-layer is a paracrystalline mono-layered assembly of proteins which coat the surface of the cell. The protein is Major S-layer protein of Methanosarcina acetivorans (strain ATCC 35395 / DSM 2834 / JCM 12185 / C2A).